Reading from the N-terminus, the 445-residue chain is Endoplasmic reticulum membrane adapter protein XK (445 aa).

Over 1-2 the chain is Cytoplasmic; sequence MK. Residues 3-23 form a helical membrane-spanning segment; sequence FPASVLASVFLFVAETMAALY. The Extracellular portion of the chain corresponds to 24 to 37; sequence LSSTYRSAGDRMWQ. Residues 38–58 traverse the membrane as a helical segment; the sequence is ALTLFFSLMPCTLVQLTLLFV. Residues 59–68 are Cytoplasmic-facing; that stretch reads HRDLSRDRPL. The helical transmembrane segment at 69–89 threads the bilayer; the sequence is VLLMHLLQLGPLYRCCEVFCI. At 90–140 the chain is on the extracellular side; the sequence is YCQSDQNEEPYVSITKKRQMPKDGLSEEVEKEVGQSEGKLFTHRSAFSRAS. At S115 the chain carries Phosphoserine. The helical transmembrane segment at 141–161 threads the bilayer; that stretch reads VIQAFLGSAPQLTLQLYITVL. At 162 to 170 the chain is on the cytoplasmic side; that stretch reads EQNITTGRF. Residues 171 to 191 form a helical membrane-spanning segment; the sequence is IMVLSLLSIVYGALRCNILAI. Over 192-207 the chain is Extracellular; the sequence is KIKYDEYEVKVKPLAY. Residues 208-228 traverse the membrane as a helical segment; it reads VCIFLWRSFEIATRVIVLVLF. Residues 229-234 lie on the Cytoplasmic side of the membrane; it reads TSVLKI. A helical transmembrane segment spans residues 235 to 255; the sequence is WVVVVILVNFFSFFLYPWILF. Residues 256-276 are Extracellular-facing; the sequence is WNSGSPFPENIEKALTRVGTT. A helical membrane pass occupies residues 277–297; the sequence is IVLGFLTLLYAGINMFCWSAV. Topologically, residues 298 to 316 are cytoplasmic; sequence QLKIDNPELISKSQNWYRL. Residues 317-337 form a helical membrane-spanning segment; the sequence is LIYYMMRFVENSVLLLLWFFF. Topologically, residues 338–348 are extracellular; sequence KTDIYMYVCAP. A helical membrane pass occupies residues 349-369; the sequence is LLILQLLIGYCTSILFMLVFY. At 370-445 the chain is on the cytoplasmic side; that stretch reads QFFHPCKKLF…IWTAVDLCST (76 aa).

Belongs to the XK family. In terms of assembly, heterodimer with Kell; disulfide-linked. Interacts with VPS13A.

The protein localises to the endoplasmic reticulum membrane. Its function is as follows. Recruits the lipid transfer protein VPS13A from lipid droplets to the endoplasmic reticulum (ER) membrane. This chain is Endoplasmic reticulum membrane adapter protein XK, found in Rattus norvegicus (Rat).